The following is a 503-amino-acid chain: MSYPGYPPPPGGYPPAPGGGAWGGAGYPPPSMPPIGLDNVANYAGQFNQDYLSGMAANMSGTFGGANVPPNLYPGAPGGGYPPVPPGGFGQPPPTQPSVPPYGVYPPPGGNPPSGVPSYPPFPGAPVPGQPMPPPGHQPPGPYPGQLPVTYPGQSPVPPPGQQPMPSYPGYPGSGTVTPAVPPVQFGNRGTITDASGFDPLRDAEVLRKAMKGFGTDEQAIIDCLGSRSNKQRQQILLSFKTAYGKDLIKDLKSELSGNFEKTILALMKTPILFDAYEIKEAIKGAGTDEACLIEILASRSNEHIRELNKAYKTEFKKTLEEAIRSDTSGHFQRLLISLSQGNRDESTNVDMSLVQRDVQELYAAGENRLGTDESKFNAVLCSRSRAHLVAVFNEYQRMTGRDIEKSICREMSGDLEQGMLAVVKCLKNTPAFFAERLNRAMRGAGTKDRTLIRIMVSRSEIDLLDIRAEYKRMYGKSLYHDISGDTSGDYRKILLKICGGND.

3 stretches are compositionally biased toward pro residues: residues 1 to 17 (MSYPGYPPPPGGYPPAP), 80 to 145 (GYPP…PYPG), and 155 to 169 (SPVPPPGQQPMPSYP). Disordered regions lie at residues 1–35 (MSYPGYPPPPGGYPPAPGGGAWGGAGYPPPSMPPI) and 56–178 (AANM…GTVT). Annexin repeat units lie at residues 198–269 (FDPL…ALMK), 270–341 (TPIL…SLSQ), 353–425 (SLVQ…AVVK), and 429–500 (NTPA…KICG). 2 positions are modified to N6-acetyllysine: Lys246 and Lys253. Residue Lys477 is modified to N6-acetyllysine.

It belongs to the annexin family. As to quaternary structure, interacts with PDCD6 in a calcium-dependent manner. Interacts with KIF23 during cytokinesis. Interacts with S100A6.

The protein resides in the cytoplasm. It localises to the melanosome. Its subcellular location is the nucleus envelope. The protein localises to the nucleus. It is found in the nucleoplasm. The protein resides in the cytoskeleton. It localises to the spindle. In terms of biological role, required for midbody formation and completion of the terminal phase of cytokinesis. Binds specifically to calcyclin in a calcium-dependent manner. This Oryctolagus cuniculus (Rabbit) protein is Annexin A11 (ANXA11).